Consider the following 489-residue polypeptide: Dipeptide and tripeptide permease B (489 aa).

Over 1–27 (MNTTTPMGMLQQPRPFFMIFFVELWER) the chain is Cytoplasmic. A helical transmembrane segment spans residues 28–48 (FGYYGVQGVLAVFFVKQLGFS). The Periplasmic segment spans residues 49 to 52 (QEQA). Residues 53–73 (FVTFGAFAALVYGLISIGGYV) form a helical membrane-spanning segment. The Cytoplasmic segment spans residues 74–82 (GDHLLGTKR). The chain crosses the membrane as a helical span at residues 83-103 (TIVLGALVLAIGYFMTGLSLL). Residues 104–106 (KPD) are Periplasmic-facing. Residues 107 to 127 (LIFIALGTIAVGNGLFKANPA) traverse the membrane as a helical segment. At 128–146 (SLLSKCYPPKAPRLDGAFT) the chain is on the cytoplasmic side. A helical transmembrane segment spans residues 147-167 (LFYMSINIGSLIALSLAPVIA). Over 168-172 (DRFGY) the chain is Periplasmic. A helical transmembrane segment spans residues 173 to 193 (SVTYNLCGAGLIIALLVYIAC). Topologically, residues 194-210 (RGMVKDIGSEPDFRPMS) are cytoplasmic. A helical transmembrane segment spans residues 211–231 (FSKLLYVLLGSVVMIFVCAWL). Over 232-233 (MH) the chain is Periplasmic. A helical membrane pass occupies residues 234 to 254 (NVEVANLVLIVLSIVVTIIFF). Residues 255–267 (RQAFKLDKTGRNK) lie on the Cytoplasmic side of the membrane. A helical transmembrane segment spans residues 268-288 (MFVAFVLMLEAVVFYILYAQM). Residues 289 to 311 (PTSLNFFAINNVHHEILGFSINP) are Periplasmic-facing. Residues 312 to 332 (VSFQALNPFWVVLASPILAGI) traverse the membrane as a helical segment. The Cytoplasmic segment spans residues 333-350 (YTHLGSKGKDLSMPMKFT). Residues 351–371 (LGMFMCSLGFLTAAAAGMWFA) form a helical membrane-spanning segment. Over 372–380 (DAQGLTSPW) the chain is Periplasmic. The helical transmembrane segment at 381–401 (FIVLVYLFQSLGELFISALGL) threads the bilayer. At 402–411 (AMVAALVPQH) the chain is on the cytoplasmic side. Residues 412-432 (LMGFILGISFLTQAAAFLLGG) traverse the membrane as a helical segment. The Periplasmic portion of the chain corresponds to 433–456 (YVATFTAVPDNITDPLETLPVYTN). A helical membrane pass occupies residues 457–477 (VFGKIGLVTLGVAVVMLLMVP). Over 478-489 (WLKRMIAAPESH) the chain is Cytoplasmic.

It belongs to the major facilitator superfamily. Proton-dependent oligopeptide transporter (POT/PTR) (TC 2.A.17) family. DtpB subfamily.

It localises to the cell inner membrane. In terms of biological role, proton-dependent permease that transports di- and tripeptides. The chain is Dipeptide and tripeptide permease B from Shigella dysenteriae serotype 1 (strain Sd197).